The following is a 285-amino-acid chain: Hydroxyacylglutathione hydrolase, mitochondrial (285 aa).

A mitochondrion-targeting transit peptide spans 1 to 10 (MKFLLQQIRN). H69, H71, D73, H74, H131, D154, and H198 together coordinate Zn(2+).

Zn(2+) serves as cofactor.

It localises to the mitochondrion matrix. The catalysed reaction is an S-(2-hydroxyacyl)glutathione + H2O = a 2-hydroxy carboxylate + glutathione + H(+). It catalyses the reaction (R)-S-lactoylglutathione + H2O = (R)-lactate + glutathione + H(+). It participates in secondary metabolite metabolism; methylglyoxal degradation; (R)-lactate from methylglyoxal: step 2/2. With respect to regulation, inhibited by various thiol compounds such as glutathione and coenzyme A. In terms of biological role, thiolesterase that catalyzes the hydrolysis of S-D-lactoylglutathione to form glutathione and D-lactic acid. Involved in the metabolism of methylglyoxal, a toxic compound for yeast proliferation, by converting methylglyoxal to lactate via S-D-lactoylglutathione by sequential enzyme reactions catalyzed by glyoxalase I and glyoxalase II. The sequence is that of Hydroxyacylglutathione hydrolase, mitochondrial from Saccharomyces cerevisiae (strain ATCC 204508 / S288c) (Baker's yeast).